The following is a 392-amino-acid chain: General receptor for phosphoinositides 1-associated scaffold protein (392 aa).

The interval 1-50 (MTLRRLRKLQQKEEATAAPDPAGRAPDSEAARAAPLPSGPPAAAAPPGAP) is disordered. The segment covering 37–49 (PSGPPAAAAPPGA) has biased composition (pro residues). Thr76 carries the phosphothreonine modification. Ser93 is subject to Phosphoserine. A PDZ domain is found at 100–189 (VLTLEKGDNQ…VLRLETLYGT (90 aa)). An interaction with PSCD3 region spans residues 180–257 (VLRLETLYGT…GAGLLPGSLP (78 aa)). At Tyr236 the chain carries Phosphotyrosine. The residue at position 269 (Arg269) is an Omega-N-methylarginine. A disordered region spans residues 294–315 (PQALPPPPPPARALGPSSAETP). Ser384 carries the post-translational modification Phosphoserine.

In terms of assembly, heteromer. Composed of TAMALIN, CYTH2 and at least one GRM1. Also interacts with GRM2, GRM3 and GRM5. Interacts with CYTH3. In terms of tissue distribution, highly expressed in brain, heart and lung, and to a lower extent in embryo, kidney and ovary.

The protein resides in the cytoplasm. The protein localises to the perinuclear region. It is found in the cell membrane. Its subcellular location is the postsynaptic cell membrane. In terms of biological role, plays a role in intracellular trafficking and contributes to the macromolecular organization of group 1 metabotropic glutamate receptors (mGluRs) at synapses. The polypeptide is General receptor for phosphoinositides 1-associated scaffold protein (Mus musculus (Mouse)).